The primary structure comprises 270 residues: uncharacterized protein (270 aa).

The disordered stretch occupies residues 166 to 186; sequence RRKENNISNESVSEEPESPLF.

This is an uncharacterized protein from Ostreid herpesvirus 1 (isolate France) (OsHV-1).